A 756-amino-acid polypeptide reads, in one-letter code: Polyribonucleotide nucleotidyltransferase (756 aa).

Asp-532 and Asp-538 together coordinate Mg(2+). One can recognise a KH domain in the interval Pro-598 to Ile-657. In terms of domain architecture, S1 motif spans Gly-669–Val-738.

This sequence belongs to the polyribonucleotide nucleotidyltransferase family. It depends on Mg(2+) as a cofactor.

The protein resides in the cytoplasm. The enzyme catalyses RNA(n+1) + phosphate = RNA(n) + a ribonucleoside 5'-diphosphate. Involved in mRNA degradation. Catalyzes the phosphorolysis of single-stranded polyribonucleotides processively in the 3'- to 5'-direction. In Rhodococcus erythropolis (strain PR4 / NBRC 100887), this protein is Polyribonucleotide nucleotidyltransferase.